The sequence spans 1528 residues: DNA topoisomerase 2-alpha (1528 aa).

Methionine 1 is modified (N-acetylmethionine). Serine 4 carries the post-translational modification Phosphoserine. A Glycyl lysine isopeptide (Lys-Gly) (interchain with G-Cter in SUMO2) cross-link involves residue lysine 17. ATP is bound by residues asparagine 90, asparagine 119, and 147–149 (SSN). Glycyl lysine isopeptide (Lys-Gly) (interchain with G-Cter in SUMO2) cross-links involve residues lysine 155 and lysine 156. 160–167 (GRNGYGAK) serves as a coordination point for ATP. At threonine 281 the chain carries Phosphothreonine. The interval 341-343 (KKK) is interaction with DNA. Lysine 351 participates in a covalent cross-link: Glycyl lysine isopeptide (Lys-Gly) (interchain with G-Cter in SUMO2). 375–377 (QTK) is a binding site for ATP. Glycyl lysine isopeptide (Lys-Gly) (interchain with G-Cter in SUMO2) cross-links involve residues lysine 385, lysine 396, lysine 415, lysine 417, lysine 424, and lysine 439. Positions 454-571 (CTLILTEGDS…SLLRHRFLEE (118 aa)) constitute a Toprim domain. Glutamate 460 provides a ligand contact to Mg(2+). Residues lysine 465, lysine 479, and lysine 528 each participate in a glycyl lysine isopeptide (Lys-Gly) (interchain with G-Cter in SUMO2) cross-link. Residues aspartate 540 and aspartate 542 each contribute to the Mg(2+) site. Residues lysine 583, lysine 598, lysine 613, lysine 621, lysine 624, lysine 631, lysine 638, lysine 654, lysine 661, and lysine 675 each participate in a glycyl lysine isopeptide (Lys-Gly) (interchain with G-Cter in SUMO2) cross-link. One can recognise a Topo IIA-type catalytic domain in the interval 714 to 1168 (IPSMVDGLKP…SPSDLWKEDL (455 aa)). The O-(5'-phospho-DNA)-tyrosine intermediate role is filled by tyrosine 804. The tract at residues 989–998 (KLQSSLTCNS) is interaction with DNA. Lysine 1074 participates in a covalent cross-link: Glycyl lysine isopeptide (Lys-Gly) (interchain with G-Cter in SUMO2). 2 disordered regions span residues 1090-1118 (KEAQ…AAEA) and 1183-1211 (KQDE…VLPS). A compositionally biased stretch (acidic residues) spans 1098 to 1107 (DEEENEESDT). Serine 1105 is modified (phosphoserine; by CK1). The span at 1108–1118 (ETSTSDSAAEA) shows a compositional bias: low complexity. Glycyl lysine isopeptide (Lys-Gly) (interchain with G-Cter in SUMO2) cross-links involve residues lysine 1193 and lysine 1201. The residue at position 1211 (serine 1211) is a Phosphoserine. Lysine 1226 is covalently cross-linked (Glycyl lysine isopeptide (Lys-Gly) (interchain with G-Cter in SUMO2)). A disordered region spans residues 1229–1528 (AEKKIRKKIK…EESDDDDDLF (300 aa)). Residue lysine 1238 forms a Glycyl lysine isopeptide (Lys-Gly) (interchain with G-Cter in SUMO1); alternate linkage. Lysine 1238 participates in a covalent cross-link: Glycyl lysine isopeptide (Lys-Gly) (interchain with G-Cter in SUMO2); alternate. The residue at position 1245 (threonine 1245) is a Phosphothreonine. The segment covering 1258–1270 (QRIEKKQKKEPGA) has biased composition (basic and acidic residues). Residues lysine 1272, lysine 1279, and lysine 1282 each participate in a glycyl lysine isopeptide (Lys-Gly) (interchain with G-Cter in SUMO2) cross-link. A phosphoserine mark is found at serine 1291, serine 1293, serine 1295, and serine 1298. Over residues 1296-1306 (DVSSNESNVDV) the composition is skewed to low complexity. Residue threonine 1323 is modified to Phosphothreonine. The span at 1326–1345 (LDSDEDFSGLDEKDEDEDFL) shows a compositional bias: acidic residues. Residues serine 1328 and serine 1333 each carry the phosphoserine modification. At threonine 1350 the chain carries Phosphothreonine. Residues lysine 1359 and lysine 1363 each participate in a glycyl lysine isopeptide (Lys-Gly) (interchain with G-Cter in SUMO2) cross-link. Serine 1370 and serine 1373 each carry phosphoserine. Lysine 1382 participates in a covalent cross-link: Glycyl lysine isopeptide (Lys-Gly) (interchain with G-Cter in SUMO2). Phosphoserine occurs at positions 1384 and 1388. Residue lysine 1418 forms a Glycyl lysine isopeptide (Lys-Gly) (interchain with G-Cter in SUMO2); alternate linkage. Lysine 1418 carries the post-translational modification N6-acetyllysine; alternate. Positions 1429–1435 (KKRAAPK) are interaction with PLSCR1. Lysine 1438 participates in a covalent cross-link: Glycyl lysine isopeptide (Lys-Gly) (interchain with G-Cter in SUMO2); alternate. Lysine 1438 is subject to N6-acetyllysine; alternate. Residues lysine 1450 and lysine 1455 each participate in a glycyl lysine isopeptide (Lys-Gly) (interchain with G-Cter in SUMO2) cross-link. Phosphoserine is present on residues serine 1465, serine 1467, serine 1470, and serine 1472. Residues lysine 1480 and lysine 1488 each participate in a glycyl lysine isopeptide (Lys-Gly) (interchain with G-Cter in SUMO2) cross-link. Residues 1506–1519 (AKSDRARKPIKYLE) are compositionally biased toward basic and acidic residues. Serine 1521 bears the Phosphoserine mark.

It belongs to the type II topoisomerase family. Homodimer. Interacts with COPS5. Interacts with RECQL5; this stimulates DNA decatenation. Interacts with SETMAR; stimulates the topoisomerase activity. Interacts with DHX9; this interaction occurs in a E2 enzyme UBE2I- and RNA-dependent manner, negatively regulates DHX9-mediated double-stranded DNA and RNA duplex helicase activity and stimulates TOP2A-mediated supercoiled DNA relaxation activity. Interacts with HNRNPU (via C-terminus); this interaction protects the topoisomerase TOP2A from degradation and positively regulates the relaxation of supercoiled DNA in a RNA-dependent manner. Interacts with MCM3AP. Interacts with ERCC6. Interacts with PLSCR1. Interacts with GCNA; this interaction allows the resolution of topoisomerase II (TOP2A) DNA-protein cross-links. Interacts with POL1RA/RPA1 (via dock II) and UBTF in the context of Pol I complex; may assist Pol I transcription initiation by releasing supercoils occurring during DNA unwinding. Interacts with TPRN; TPRN interacts with a number of DNA damage response proteins, is recruited to sites of DNA damage and may play a role in DNA damage repair. Requires Mg(2+) as cofactor. Mn(2+) is required as a cofactor. It depends on Ca(2+) as a cofactor. Phosphorylation has no effect on catalytic activity. However, phosphorylation at Ser-1105 by CSNK1D/CK1 promotes DNA cleavable complex formation.

Its subcellular location is the cytoplasm. It localises to the nucleus. The protein resides in the nucleoplasm. It is found in the nucleolus. The enzyme catalyses ATP-dependent breakage, passage and rejoining of double-stranded DNA.. Its function is as follows. Key decatenating enzyme that alters DNA topology by binding to two double-stranded DNA molecules, generating a double-stranded break in one of the strands, passing the intact strand through the broken strand, and religating the broken strand. May play a role in regulating the period length of BMAL1 transcriptional oscillation. This is DNA topoisomerase 2-alpha (Top2a) from Mus musculus (Mouse).